Here is a 567-residue protein sequence, read N- to C-terminus: Urease subunit alpha (567 aa).

One can recognise a Urease domain in the interval 130–567; that stretch reads GGIDTHIHFI…LPLAQRYFLF (438 aa). Residues His-135, His-137, and Lys-218 each coordinate Ni(2+). An N6-carboxylysine modification is found at Lys-218. His-220 lines the substrate pocket. Ni(2+) contacts are provided by His-247 and His-273. His-321 acts as the Proton donor in catalysis. Asp-361 is a Ni(2+) binding site.

The protein belongs to the metallo-dependent hydrolases superfamily. Urease alpha subunit family. As to quaternary structure, heterotrimer of UreA (gamma), UreB (beta) and UreC (alpha) subunits. Three heterotrimers associate to form the active enzyme. Ni cation serves as cofactor. Carboxylation allows a single lysine to coordinate two nickel ions.

It localises to the cytoplasm. The enzyme catalyses urea + 2 H2O + H(+) = hydrogencarbonate + 2 NH4(+). The protein operates within nitrogen metabolism; urea degradation; CO(2) and NH(3) from urea (urease route): step 1/1. This is Urease subunit alpha from Methylobacillus flagellatus (strain ATCC 51484 / DSM 6875 / VKM B-1610 / KT).